The following is a 349-amino-acid chain: Protein RecA (349 aa).

71–75 lines the phosphate pocket; it reads SSGKT. Residues 71–76 and 102–105 contribute to the ATP site; these read SSGKTT and DPEY. Residue glutamine 196 coordinates phosphate.

Belongs to the RecA family. Polymerizes non-specifically on ssDNA to form filaments. Interacts with and activates LexA leading to autocatalytic cleavage of LexA, which derepresses the SOS regulon and activates DNA repair.

The protein resides in the cytoplasm. Required for homologous recombination (HR) and the bypass of mutagenic DNA lesions (double strand breaks, DSB) by the SOS response. Can catalyze the hydrolysis of ATP in the presence of single-stranded DNA, the ATP-dependent uptake of single-stranded DNA by duplex DNA, and the ATP-dependent hybridization of homologous single-stranded DNAs. Numerous X-ray crystals have been resolved under different conditions which indicate the flexibility of the protein, essential to its function. Gln-196 contributes to this plasticity by acting as a switch residue, which transmits the effect of nucleotide binding to the DNA-binding region. This Mycolicibacterium smegmatis (strain ATCC 700084 / mc(2)155) (Mycobacterium smegmatis) protein is Protein RecA.